The primary structure comprises 209 residues: HTLV-1 basic zipper factor (209 aa).

Positions 41–165 are disordered; the sequence is EEEETVLDGL…KEKMQELGVD (125 aa). 2 stretches are compositionally biased toward basic and acidic residues: residues 72 to 87 and 94 to 160; these read PRGE…AEEK and REKE…EKMQ. 3 short sequence motifs (nuclear localization signal) span residues 87 to 92, 116 to 120, and 137 to 141; these read KRKRKK, RRKRA, and RRERK.

It belongs to the HTLV-1 HBZ protein family. In terms of assembly, interacts with host ATF4; this interaction inhibits viral RNA transcriptional activation by preventing ATF4 binding to Tax-responsive elements. Interacts with host CREB1; this interaction inhibits host CREB1 transcriptional activity. Interacts with host JUN, JUNB and JUND. Interacts with host EP300 and CREBBP; these interactions inhibit the association of the coactivators with the viral promoter. Interacts with host UBR5; this interaction regulates HBZ protein stability. Interacts with XRCC5 and XRCC6. Interacts with IRF7 and IKBKE; this interaction modulates host interferon signaling. In terms of processing, ubiquitinated by host E3 ligase UBR5 leading to HBZ degradation.

The protein resides in the host nucleus. In terms of biological role, enhances viral infectivity and persistence, and facilitates proliferation of HTLV-1-infected lymphocytes. Mechanistically, inhibits Tax-mediated viral replication and NF-kappa-B activation. Plays a role in allowing infected T-cells to escape the cytotoxic T-lymphocyte response by maintaining low levels of viral protein production. Also inhibits host EP300 histone acetyltransferase (HAT) activity, reducing levels of acetylated histone H3 at 'Lys-18' (H3K18ac) in infected cells. Contributes to the accumulation of chromosomal abnormalities by inhibiting double-stranded DNA breaks (DSB) repair through the NHEJ pathway. Participates in the modulation of host immune response at multiple levels contributing to abnormal interferon signaling and viral pathogenesis. The protein is HTLV-1 basic zipper factor (HBZ) of Human T-cell leukemia virus 1 (isolate Caribbea HS-35 subtype A) (HTLV-1).